Consider the following 55-residue polypeptide: Ribosome biogenesis protein Nop10 (55 aa).

The protein belongs to the NOP10 family.

Its function is as follows. Involved in ribosome biogenesis; more specifically in 18S rRNA pseudouridylation and in cleavage of pre-rRNA. The sequence is that of Ribosome biogenesis protein Nop10 from Methanosphaera stadtmanae (strain ATCC 43021 / DSM 3091 / JCM 11832 / MCB-3).